The following is a 351-amino-acid chain: Ion-translocating oxidoreductase complex subunit D (351 aa).

4 helical membrane passes run 18–38, 40–60, 87–107, and 121–141; these read IMLL…YFFG, GSLI…GAVL, LPPL…IVIA, and PAMV…TSWL. FMN phosphoryl threonine is present on Thr185. The next 5 membrane-spanning stretches (helical) occupy residues 211–231, 241–261, 264–284, 298–318, and 320–340; these read VLAG…GLLL, IPVS…MIAP, FASP…FFIA, LIFG…GGYP, and GVAF…HYTQ.

Belongs to the NqrB/RnfD family. The complex is composed of six subunits: RnfA, RnfB, RnfC, RnfD, RnfE and RnfG. FMN is required as a cofactor.

The protein resides in the cell inner membrane. Its function is as follows. Part of a membrane-bound complex that couples electron transfer with translocation of ions across the membrane. This chain is Ion-translocating oxidoreductase complex subunit D, found in Yersinia pseudotuberculosis serotype O:1b (strain IP 31758).